The following is a 269-amino-acid chain: GTP cyclohydrolase FolE2 (269 aa).

This sequence belongs to the GTP cyclohydrolase IV family.

The enzyme catalyses GTP + H2O = 7,8-dihydroneopterin 3'-triphosphate + formate + H(+). It participates in cofactor biosynthesis; 7,8-dihydroneopterin triphosphate biosynthesis; 7,8-dihydroneopterin triphosphate from GTP: step 1/1. Converts GTP to 7,8-dihydroneopterin triphosphate. This chain is GTP cyclohydrolase FolE2, found in Burkholderia ambifaria (strain MC40-6).